A 588-amino-acid polypeptide reads, in one-letter code: Mediator of RNA polymerase II transcription subunit 26 (588 aa).

A TFIIS N-terminal domain is found at 10–87 (QMRDRLLQAI…RSWQKLIEPV (78 aa)). Disordered regions lie at residues 112-393 (RPEM…YTVN) and 412-441 (KLTF…PTEQ). The span at 123–133 (SIHDLKNRNDI) shows a compositional bias: basic and acidic residues. The span at 179-191 (PLPTNGISGSPES) shows a compositional bias: polar residues. Positions 207–218 (SRLEPSDNEKHS) are enriched in basic and acidic residues. The span at 314 to 325 (SPLPLAQPPTPP) shows a compositional bias: pro residues. Phosphoserine is present on residues serine 435 and serine 458.

The protein belongs to the Mediator complex subunit 26 family. Component of the Mediator complex, which is composed of MED1, MED4, MED6, MED7, MED8, MED9, MED10, MED11, MED12, MED13, MED13L, MED14, MED15, MED16, MED17, MED18, MED19, MED20, MED21, MED22, MED23, MED24, MED25, MED26, MED27, MED29, MED30, MED31, CCNC, CDK8 and CDC2L6/CDK11. The MED12, MED13, CCNC and CDK8 subunits form a distinct module termed the CDK8 module. Mediator containing the CDK8 module is less active than Mediator lacking this module in supporting transcriptional activation. Individual preparations of the Mediator complex lacking one or more distinct subunits have been variously termed ARC, CRSP, DRIP, PC2, SMCC and TRAP. Interacts with CEBPB (when not methylated).

The protein localises to the nucleus. In terms of biological role, component of the Mediator complex, a coactivator involved in the regulated transcription of nearly all RNA polymerase II-dependent genes. Mediator functions as a bridge to convey information from gene-specific regulatory proteins to the basal RNA polymerase II transcription machinery. Mediator is recruited to promoters by direct interactions with regulatory proteins and serves as a scaffold for the assembly of a functional pre-initiation complex with RNA polymerase II and the general transcription factors. The sequence is that of Mediator of RNA polymerase II transcription subunit 26 (Med26) from Mus musculus (Mouse).